A 372-amino-acid chain; its full sequence is uncharacterized protein (372 aa).

A signal peptide spans 1–24 (MSYYQIIVCILASISYIILLEVIA). Positions 92–215 (PNRNDTDASY…SSYNLLWSDL (124 aa)) constitute a PA domain. A helical transmembrane segment spans residues 236–256 (FWPFLLCFSPSIIMLITVQAL). Phosphoserine is present on S280. The segment at 321 to 363 (CVICLESFTKGDKVVALPCKHEFHRPCIAKWIVDYRHACPTCN) adopts an RING-type; atypical zinc-finger fold.

Its subcellular location is the golgi apparatus membrane. It is found in the vacuole membrane. This is an uncharacterized protein from Schizosaccharomyces pombe (strain 972 / ATCC 24843) (Fission yeast).